The chain runs to 354 residues: Fructose-1,6-bisphosphatase class 1 (354 aa).

Mg(2+) is bound by residues Glu-112, Asp-134, Leu-136, and Asp-137. Substrate contacts are provided by residues 137–140 (DGSS), Asn-229, Tyr-257, and Lys-287. Mg(2+) is bound at residue Glu-293.

This sequence belongs to the FBPase class 1 family. In terms of assembly, homotetramer. Mg(2+) serves as cofactor.

The protein resides in the cytoplasm. It carries out the reaction beta-D-fructose 1,6-bisphosphate + H2O = beta-D-fructose 6-phosphate + phosphate. It participates in carbohydrate biosynthesis; Calvin cycle. The sequence is that of Fructose-1,6-bisphosphatase class 1 from Trichodesmium erythraeum (strain IMS101).